A 451-amino-acid chain; its full sequence is UBP1-associated protein 2B (451 aa).

The segment at 1 to 86 (MTKKRKLESE…GNEDDDEEEP (86 aa)) is disordered. Composition is skewed to basic and acidic residues over residues 25 to 38 (CEKE…VDNQ) and 49 to 63 (DTLK…KGED). Positions 67–77 (AETSSGSGNQG) are enriched in polar residues. 2 RRM domains span residues 128–236 (RKIF…NVSA) and 227–314 (RKIY…QHQH). Disordered regions lie at residues 302–335 (ANDG…GYGA) and 423–451 (GGYQ…YMGR). Residues 431-451 (GQGGAGRGQHGAGYGGPYMGR) are compositionally biased toward gly residues.

In terms of tissue distribution, expressed in shoot meristem and flowers.

The protein resides in the nucleus. Its function is as follows. Heterogeneous nuclear ribonucleoprotein (hnRNP)-like protein that acts as a component of a complex regulating the turnover of mRNAs in the nucleus. Binds with high affinity to RNA molecules that contain U-rich sequences in 3'-UTRs. May function in complex with UBP1 and contribute to the stabilization of mRNAs in the nucleus. This chain is UBP1-associated protein 2B (UBA2B), found in Arabidopsis thaliana (Mouse-ear cress).